Reading from the N-terminus, the 838-residue chain is Protein kintoun (838 aa).

Disordered stretches follow at residues 106 to 125 (RPKNEVATDPSSGSRGLNWS), 212 to 238 (NPTAEEQEPHPLAHMFPTKPPAPGKPE), 370 to 411 (LRHF…TSSP), 557 to 696 (NAPL…DSCS), and 776 to 838 (QQRR…EMDD). The span at 114-125 (DPSSGSRGLNWS) shows a compositional bias: polar residues. Basic and acidic residues predominate over residues 370–380 (LRHFSREDSGV). S378 carries the phosphoserine modification. Residues 389–398 (PVEEDPDGEL) show a composition bias toward acidic residues. A compositionally biased stretch (basic and acidic residues) spans 557-572 (NAPLDVEFERNQEGHA). A compositionally biased stretch (acidic residues) spans 583-592 (EEEEEEEDKE). Positions 601–611 (DQQQQQQVQNK) are enriched in low complexity. 2 stretches are compositionally biased toward basic residues: residues 612–623 (KSGKKQRKRNKK) and 673–683 (RSHRGILKRFS). S781 carries the phosphoserine modification. Basic and acidic residues predominate over residues 789 to 802 (EETRGSALKQKENP).

This sequence belongs to the PIH1 family. Kintoun subfamily. In terms of assembly, interacts with Pp1alpha-96A, Pp1-87B, Pp1-13C and flw.

The protein resides in the cytoplasm. Required for cytoplasmic pre-assembly of axonemal dyneins, thereby playing a central role in motility in cilia and flagella. Involved in pre-assembly of dynein arm complexes in the cytoplasm before intraflagellar transport loads them for the ciliary compartment. This chain is Protein kintoun, found in Drosophila sechellia (Fruit fly).